The chain runs to 96 residues: Small ribosomal subunit protein uS19 (96 aa).

The disordered stretch occupies residues 1–30 (MARSIKKGPFADKHLTKKVEDANKGNKKSV). Basic and acidic residues predominate over residues 9–24 (PFADKHLTKKVEDANK).

The protein belongs to the universal ribosomal protein uS19 family.

In terms of biological role, protein S19 forms a complex with S13 that binds strongly to the 16S ribosomal RNA. This is Small ribosomal subunit protein uS19 from Anaeromyxobacter sp. (strain Fw109-5).